The chain runs to 505 residues: ATP synthase subunit alpha (505 aa).

ATP is bound at residue 170-177; sequence GDRQTGKS.

It belongs to the ATPase alpha/beta chains family. As to quaternary structure, F-type ATPases have 2 components, CF(1) - the catalytic core - and CF(0) - the membrane proton channel. CF(1) has five subunits: alpha(3), beta(3), gamma(1), delta(1), epsilon(1). CF(0) has four main subunits: a(1), b(1), b'(1) and c(9-12).

It is found in the cellular thylakoid membrane. The catalysed reaction is ATP + H2O + 4 H(+)(in) = ADP + phosphate + 5 H(+)(out). Its function is as follows. Produces ATP from ADP in the presence of a proton gradient across the membrane. The alpha chain is a regulatory subunit. This is ATP synthase subunit alpha from Prochlorococcus marinus (strain AS9601).